Consider the following 634-residue polypeptide: Beta-ketoacyl-[acyl-carrier-protein] synthase FabY (634 aa).

Residues 78–546 (ERIFASTLVR…GNNASGVVLS (469 aa)) form the Ketosynthase family 3 (KS3) domain. Residues Cys281, His434, and His472 each act as for beta-ketoacyl synthase activity in the active site.

It belongs to the thiolase-like superfamily. Beta-ketoacyl-ACP synthases family. In terms of assembly, homodimer.

The enzyme catalyses malonyl-[ACP] + acetyl-CoA + H(+) = 3-oxobutanoyl-[ACP] + CO2 + CoA. It functions in the pathway lipid metabolism; fatty acid biosynthesis. Its function is as follows. Involved in the initiation of the fatty acid biosynthesis. Catalyzes the condensation of acetyl coenzyme A (acetyl-CoA) with malonyl-acyl carrier protein (ACP) to make the fatty acid synthesis (FAS) primer beta-acetoacetyl-ACP. It can also use short-chain acyl-CoA as substrates, including butyryl-CoA, and hexanoyl-CoA, but does not use any of the longer chain acyl-CoA substrates. This is Beta-ketoacyl-[acyl-carrier-protein] synthase FabY (fabY) from Pseudomonas aeruginosa (strain ATCC 15692 / DSM 22644 / CIP 104116 / JCM 14847 / LMG 12228 / 1C / PRS 101 / PAO1).